The sequence spans 287 residues: MEGIIIKGIGGFYYIKTDEGIIECKARGKFRYNSLKPMVGDRVTIKVENGKGVIEDIHERSSELIRPTVANVTQAFVVFAIKNPDINLDLLNRFLTLCEYNDIHAVVCLNKEDLCTEEEKENLKELINDIGYEVLFINAKEGKGFDALKERLEHNITVLCGPSGAGKSTLLNSFIDREHMETGSVSEKIGRGKHTTRHSELIDVDNGYLVDTPGFTTLDVTFIDRDSLKYCFPEFNDYNNLCKFNGCNHYKEPKCAVKEAVEEGKINKLRYEFYIKTLEEIINRRGN.

In terms of domain architecture, CP-type G spans 61 to 218 (SSELIRPTVA…LVDTPGFTTL (158 aa)). GTP contacts are provided by residues 110-113 (NKED) and 161-169 (GPSGAGKST). Zn(2+) is bound by residues cysteine 242, cysteine 247, histidine 249, and cysteine 255.

This sequence belongs to the TRAFAC class YlqF/YawG GTPase family. RsgA subfamily. Monomer. Associates with 30S ribosomal subunit, binds 16S rRNA. Requires Zn(2+) as cofactor.

The protein localises to the cytoplasm. Functionally, one of several proteins that assist in the late maturation steps of the functional core of the 30S ribosomal subunit. Helps release RbfA from mature subunits. May play a role in the assembly of ribosomal proteins into the subunit. Circularly permuted GTPase that catalyzes slow GTP hydrolysis, GTPase activity is stimulated by the 30S ribosomal subunit. The sequence is that of Small ribosomal subunit biogenesis GTPase RsgA from Clostridium perfringens (strain 13 / Type A).